We begin with the raw amino-acid sequence, 124 residues long: Schlafen-like protein (124 aa).

It belongs to the Schlafen family. Subgroup poxviridae B3 subfamily.

The sequence is that of Schlafen-like protein from Homo sapiens (Human).